The sequence spans 904 residues: DNA replication licensing factor MCM2 (904 aa).

Over residues 1–12 (MAESSESLSASS) the composition is skewed to low complexity. Positions 1–166 (MAESSESLSA…ATEDGEEDEE (166 aa)) are disordered. A2 is modified (N-acetylalanine). The interaction with KAT7 stretch occupies residues 2–257 (AESSESLSAS…LPEAPAELLQ (256 aa)). Phosphoserine occurs at positions 12 and 21. T25 carries the post-translational modification Phosphothreonine. Phosphoserine is present on residues S26, S27, and S32. Position 39 is a phosphothreonine (T39). S40 is subject to Phosphoserine; by CDC7. Phosphoserine is present on S41. S53 is modified (phosphoserine; by CDC7). A Phosphothreonine modification is found at T59. Residues 61 to 130 (GPMEEEEDGE…DREAGRGLGR (70 aa)) are interaction with DNJC9. Residues 62-73 (PMEEEEDGEELI) are compositionally biased toward acidic residues. Over residues 76–85 (GMERDYRPIP) the composition is skewed to basic and acidic residues. Positions 88 to 104 (DVYEAEGLALDDEDVEE) are enriched in acidic residues. S108 bears the Phosphoserine mark. Over residues 111–125 (EAAERTMRQRDREAG) the composition is skewed to basic and acidic residues. Y137 carries the phosphotyrosine modification. Phosphoserine occurs at positions 139 and 140. K178 participates in a covalent cross-link: Glycyl lysine isopeptide (Lys-Gly) (interchain with G-Cter in SUMO2). Residue K216 is modified to N6-acetyllysine. The C4-type zinc finger occupies 329–355 (CSKCNFVLGPFCQSQNQEVKPGSCPEC). 2 positions are modified to phosphoserine: S381 and S484. The MCM domain maps to 473 to 680 (IGEKIFASIA…QDEMLARFVV (208 aa)). S530 and Q531 together coordinate ADP. The Arginine finger motif lies at 655 to 658 (SRFD).

Belongs to the MCM family. Component of the MCM2-7 complex. The complex forms a toroidal hexameric ring with the proposed subunit order MCM2-MCM6-MCM4-MCM7-MCM3-MCM5. Component of the CMG helicase complex, a hexameric ring of related MCM2-7 subunits stabilized by CDC45 and the tetrameric GINS complex. Interacts with DBF4. Interacts with KAT7. May interact with MCM10. Component of the replisome complex composed of at least DONSON, MCM2, MCM7, PCNA and TICRR. Forms a co-chaperone complex with DNAJC9 and histone H3.3-H4 heterodimers. Within the complex, interacts (via N-terminus) with DNAJC9 (via C-terminus); the interaction is histone-dependent. Interacts with AGER/RAGE; the interaction is increased following DNA replication stress and stabilizes the MCM2-7 complex at replication forks. Post-translationally, phosphorylated on Ser-108 by ATR in proliferating cells. Ser-108 proliferation is increased by genotoxic agents. Ser-40 is mediated by the CDC7-DBF4 and CDC7-DBF4B complexes, while Ser-53 phosphorylation is only mediated by the CDC7-DBF4 complex. Phosphorylation by the CDC7-DBF4 complex during G1/S phase is required for the initiation of DNA replication. In terms of processing, acetylated by MCM3AP. O-glycosylated (O-GlcNAcylated), in a cell cycle-dependent manner.

Its subcellular location is the nucleus. The protein localises to the chromosome. It carries out the reaction ATP + H2O = ADP + phosphate + H(+). Its function is as follows. Acts as a component of the MCM2-7 complex (MCM complex) which is the replicative helicase essential for 'once per cell cycle' DNA replication initiation and elongation in eukaryotic cells. Core component of CDC45-MCM-GINS (CMG) helicase, the molecular machine that unwinds template DNA during replication, and around which the replisome is built. The active ATPase sites in the MCM2-7 ring are formed through the interaction surfaces of two neighboring subunits such that a critical structure of a conserved arginine finger motif is provided in trans relative to the ATP-binding site of the Walker A box of the adjacent subunit. The six ATPase active sites, however, are likely to contribute differentially to the complex helicase activity. Required for the entry in S phase and for cell division. Plays a role in terminally differentiated hair cells development of the cochlea and induces cells apoptosis. The sequence is that of DNA replication licensing factor MCM2 (Mcm2) from Mus musculus (Mouse).